Reading from the N-terminus, the 126-residue chain is Holo-[acyl-carrier-protein] synthase (126 aa).

Mg(2+)-binding residues include Asp-8 and Glu-57.

The protein belongs to the P-Pant transferase superfamily. AcpS family. Mg(2+) serves as cofactor.

The protein localises to the cytoplasm. It catalyses the reaction apo-[ACP] + CoA = holo-[ACP] + adenosine 3',5'-bisphosphate + H(+). Functionally, transfers the 4'-phosphopantetheine moiety from coenzyme A to a Ser of acyl-carrier-protein. This Vibrio cholerae serotype O1 (strain ATCC 39315 / El Tor Inaba N16961) protein is Holo-[acyl-carrier-protein] synthase.